The sequence spans 402 residues: Sex hormone-binding globulin (402 aa).

An N-terminal signal peptide occupies residues 1–29 (MESRGPLATSRLLLLLLLLLLRHTRQGWA). An O-linked (GalNAc...) threonine glycan is attached at threonine 36. 2 consecutive Laminin G-like domains span residues 45–217 (VHLS…LRSC) and 224–390 (GIFL…THSC). Intrachain disulfides connect cysteine 193-cysteine 217 and cysteine 362-cysteine 390. N-linked (GlcNAc...) asparagine glycosylation is found at asparagine 380 and asparagine 396.

Homodimer. Variant Asn-356 contains one N-linked (GlcNAc...) at position 356. Isoform 1 and isoform 2 are present in liver and testis.

The protein resides in the secreted. Functionally, functions as an androgen transport protein, but may also be involved in receptor mediated processes. Each dimer binds one molecule of steroid. Specific for 5-alpha-dihydrotestosterone, testosterone, and 17-beta-estradiol. Regulates the plasma metabolic clearance rate of steroid hormones by controlling their plasma concentration. The chain is Sex hormone-binding globulin from Homo sapiens (Human).